The primary structure comprises 152 residues: UPF0178 protein YaiI (152 aa).

The protein belongs to the UPF0178 family.

In Shigella boydii serotype 18 (strain CDC 3083-94 / BS512), this protein is UPF0178 protein YaiI.